A 138-amino-acid chain; its full sequence is Eukaryotic translation initiation factor 1A (138 aa).

Over residues 1–15 (MPKNKGKGGKNRRRG) the composition is skewed to basic residues. A disordered region spans residues 1 to 28 (MPKNKGKGGKNRRRGKNENENEKRELTY). A compositionally biased stretch (basic and acidic residues) spans 16-27 (KNENENEKRELT). In terms of domain architecture, S1-like spans 22–96 (EKRELTYAEE…EKGDVILKYT (75 aa)).

Belongs to the eIF-1A family.

In terms of biological role, seems to be required for maximal rate of protein biosynthesis. Enhances ribosome dissociation into subunits and stabilizes the binding of the initiator Met-tRNA(I) to 40 S ribosomal subunits. The chain is Eukaryotic translation initiation factor 1A (tif11) from Schizosaccharomyces pombe (strain 972 / ATCC 24843) (Fission yeast).